The primary structure comprises 181 residues: Adenylate kinase 2 (181 aa).

10–15 (GSGKST) provides a ligand contact to ATP. The segment at 30–59 (SMGGILREAIANATPLGIKAKPYVERGDLL) is NMP. Residues R36, 57 to 59 (DLL), 85 to 88 (GYPR), and Q92 each bind AMP. The tract at residues 126–132 (NRSLFDD) is LID. R127 contributes to the ATP binding site. Position 140 (R140) interacts with AMP. P168 is a binding site for ATP.

The protein belongs to the adenylate kinase family. In terms of assembly, monomer.

It is found in the cytoplasm. The enzyme catalyses AMP + ATP = 2 ADP. The protein operates within purine metabolism; AMP biosynthesis via salvage pathway; AMP from ADP: step 1/1. In terms of biological role, catalyzes the reversible transfer of the terminal phosphate group between ATP and AMP. Plays an important role in cellular energy homeostasis and in adenine nucleotide metabolism. In Synechocystis sp. (strain ATCC 27184 / PCC 6803 / Kazusa), this protein is Adenylate kinase 2.